A 440-amino-acid chain; its full sequence is C-terminal-binding protein 1 (440 aa).

Residues Ser-100, 180-185, Asp-204, 237-243, 264-266, and Asp-290 each bind NAD(+); these read IGLGRV, CGLNEHN, and TAR. Arg-266 is a catalytic residue. The active site involves Glu-295. His-315 functions as the Proton donor in the catalytic mechanism. 315–318 serves as a coordination point for NAD(+); it reads HAAW. The interval 409-440 is disordered; that stretch reads HAHPAVAHPPHAPSPGQTIKPEADRDHPSDQL. Basic and acidic residues predominate over residues 429–440; it reads PEADRDHPSDQL.

This sequence belongs to the D-isomer specific 2-hydroxyacid dehydrogenase family. Requires NAD(+) as cofactor.

Its subcellular location is the nucleus. Corepressor targeting diverse transcription regulators. Has dehydrogenase activity. This is C-terminal-binding protein 1 (ctbp1) from Xenopus laevis (African clawed frog).